Here is a 479-residue protein sequence, read N- to C-terminus: PTS system MurNAc-GlcNAc-specific EIIBC component (479 aa).

A PTS EIIB type-1 domain is found at 5-87; the sequence is QILAEHIIDA…SELSGAPLGE (83 aa). C27 serves as the catalytic Phosphocysteine intermediate; for EIIB activity. The PTS EIIC type-1 domain occupies 125 to 479; that stretch reads KTIANIFIPL…AMRESDTLGD (355 aa). 10 helical membrane passes run 130–150, 169–189, 195–215, 229–249, 269–289, 303–323, 344–364, 379–399, 403–423, and 445–465; these read IFIP…IAAV, VTVF…FTGI, FGAT…TGLT, LQPG…LSII, ITLF…AGFV, IGGV…VMLG, LLPI…ALWV, ALPV…TLPL, FITA…IGHI, and LGYI…TYFF.

Its subcellular location is the cell membrane. The catalysed reaction is N-acetyl-beta-D-muramate-(1-&gt;4)-N-acetyl-D-glucosamine(out) + N(pros)-phospho-L-histidyl-[protein] = 6-phospho-N-acetyl-beta-D-muramate-(1-&gt;4)-N-acetyl-D-glucosamine(in) + L-histidyl-[protein]. Its pathway is cell wall biogenesis; peptidoglycan recycling. The phosphoenolpyruvate-dependent sugar phosphotransferase system (sugar PTS), a major carbohydrate active transport system, catalyzes the phosphorylation of incoming sugar substrates concomitantly with their translocation across the cell membrane. This system is involved in the uptake and phosphorylation of MurNAc-GlcNAc, the principle peptidoglycan turnover product of S.aureus, yielding cytoplasmic MurNAc 6P-GlcNAc. This Staphylococcus saprophyticus subsp. saprophyticus (strain ATCC 15305 / DSM 20229 / NCIMB 8711 / NCTC 7292 / S-41) protein is PTS system MurNAc-GlcNAc-specific EIIBC component.